The sequence spans 393 residues: Acetylornithine aminotransferase (393 aa).

Residues 102–103 (GA) and F136 each bind pyridoxal 5'-phosphate. R139 is a binding site for N(2)-acetyl-L-ornithine. Residue 219–222 (DEVQ) participates in pyridoxal 5'-phosphate binding. Residue K248 is modified to N6-(pyridoxal phosphate)lysine. Residue S274 coordinates N(2)-acetyl-L-ornithine. Pyridoxal 5'-phosphate is bound at residue T275.

It belongs to the class-III pyridoxal-phosphate-dependent aminotransferase family. ArgD subfamily. As to quaternary structure, homodimer. It depends on pyridoxal 5'-phosphate as a cofactor.

Its subcellular location is the cytoplasm. It catalyses the reaction N(2)-acetyl-L-ornithine + 2-oxoglutarate = N-acetyl-L-glutamate 5-semialdehyde + L-glutamate. It participates in amino-acid biosynthesis; L-arginine biosynthesis; N(2)-acetyl-L-ornithine from L-glutamate: step 4/4. The polypeptide is Acetylornithine aminotransferase (Wolinella succinogenes (strain ATCC 29543 / DSM 1740 / CCUG 13145 / JCM 31913 / LMG 7466 / NCTC 11488 / FDC 602W) (Vibrio succinogenes)).